The chain runs to 225 residues: GTP:AMP phosphotransferase, mitochondrial (225 aa).

24-29 is a GTP binding site; sequence GSGKGT. Residues 45-74 form an NMP region; it reads SSGDILRQEIKSESTLGREATTYIAQGKLL. Residues serine 46, arginine 51, 72–74, 103–106, and glutamine 110 each bind AMP; these read KLL and GFPR. An LID region spans residues 144–181; sequence NRYVHVPSGRVYNLQYNPPKVPGLDDITGEPLTKRLDD. Residues arginine 145 and 154-155 each bind GTP; that span reads VY. 2 residues coordinate AMP: arginine 178 and arginine 189. Serine 218 contacts GTP.

The protein belongs to the adenylate kinase family. AK3 subfamily. In terms of assembly, monomer.

It localises to the mitochondrion matrix. The catalysed reaction is a ribonucleoside 5'-triphosphate + AMP = a ribonucleoside 5'-diphosphate + ADP. Involved in maintaining the homeostasis of cellular nucleotides by catalyzing the interconversion of nucleoside phosphates. Has GTP:AMP phosphotransferase and ITP:AMP phosphotransferase activities. Does not accept ATP as phosphate donor. This is GTP:AMP phosphotransferase, mitochondrial from Saccharomyces cerevisiae (strain ATCC 204508 / S288c) (Baker's yeast).